A 345-amino-acid chain; its full sequence is 3-dehydroquinate synthase (345 aa).

NAD(+)-binding positions include 86–90, 110–111, K123, and K132; these read GALLD and TT. Positions 165, 229, and 243 each coordinate Zn(2+).

Belongs to the sugar phosphate cyclases superfamily. Dehydroquinate synthase family. It depends on NAD(+) as a cofactor. Requires Co(2+) as cofactor. Zn(2+) serves as cofactor.

It localises to the cytoplasm. The enzyme catalyses 7-phospho-2-dehydro-3-deoxy-D-arabino-heptonate = 3-dehydroquinate + phosphate. The protein operates within metabolic intermediate biosynthesis; chorismate biosynthesis; chorismate from D-erythrose 4-phosphate and phosphoenolpyruvate: step 2/7. Its function is as follows. Catalyzes the conversion of 3-deoxy-D-arabino-heptulosonate 7-phosphate (DAHP) to dehydroquinate (DHQ). In Pyrobaculum aerophilum (strain ATCC 51768 / DSM 7523 / JCM 9630 / CIP 104966 / NBRC 100827 / IM2), this protein is 3-dehydroquinate synthase.